The primary structure comprises 430 residues: Dye-decolorizing peroxidase Tfu_3078 (430 aa).

Residues 1–39 (MTEPDTERKGSSRRGFLAGLGAAALTGAGIGMAAGEVLR) constitute a signal peptide (tat-type signal). The tract at residues 42–75 (LPDSDPAASPEAEQRLRMAAQRADATAAPQPGIS) is disordered. The segment covering 60–69 (AAQRADATAA) has biased composition (low complexity). The Proton acceptor role is filled by D242. H338 contacts heme.

It belongs to the DyP-type peroxidase family. Monomer. Heme b serves as cofactor. Exported by the Tat system. The position of the signal peptide cleavage has not been experimentally proven.

It localises to the secreted. It carries out the reaction Reactive Blue 5 + 2 H2O2 = 2,2'-disulfonyl azobenzene + 3-[(4-amino-6-chloro-1,3,5-triazin-2-yl)amino]benzenesulfonate + phthalate + 2 H2O + 2 H(+). Peroxidase that is able to convert a large number of compounds, but its physiological substrate is not known. Shows high reactivity towards anthraquinone dyes (e.g. Reactive Blue 19) and a modest activity towards standard peroxidase substrates (such as guaiacol and 2,6-dimethoxyphenol) and azo dyes (e.g. Reactive Blue 5). Is also able to oxidize aromatic sulfides enantioselectively, resulting in the corresponding (R)-sulfoxides, but with a poor efficiency. Does not display catalase activity. This is Dye-decolorizing peroxidase Tfu_3078 from Thermobifida fusca (strain YX).